Consider the following 283-residue polypeptide: ATP phosphoribosyltransferase (283 aa).

It belongs to the ATP phosphoribosyltransferase family. Long subfamily. Mg(2+) is required as a cofactor.

The protein resides in the cytoplasm. The enzyme catalyses 1-(5-phospho-beta-D-ribosyl)-ATP + diphosphate = 5-phospho-alpha-D-ribose 1-diphosphate + ATP. The protein operates within amino-acid biosynthesis; L-histidine biosynthesis; L-histidine from 5-phospho-alpha-D-ribose 1-diphosphate: step 1/9. With respect to regulation, feedback inhibited by histidine. Its function is as follows. Catalyzes the condensation of ATP and 5-phosphoribose 1-diphosphate to form N'-(5'-phosphoribosyl)-ATP (PR-ATP). Has a crucial role in the pathway because the rate of histidine biosynthesis seems to be controlled primarily by regulation of HisG enzymatic activity. This chain is ATP phosphoribosyltransferase, found in Bifidobacterium longum subsp. infantis (strain ATCC 15697 / DSM 20088 / JCM 1222 / NCTC 11817 / S12).